Consider the following 343-residue polypeptide: Cell cycle control protein 50C (343 aa).

Residues 1–34 (MKRKCQDYESRLPDNTAVKQQQLPAFRLQLTASE) are Cytoplasmic-facing. A helical membrane pass occupies residues 35–55 (ILSGFFAIGLFCLGMGIILLL). The Extracellular portion of the chain corresponds to 56–306 (SAKSIKEVEI…STLTWSGGSS (251 aa)). Asparagine 66, asparagine 164, asparagine 205, and asparagine 265 each carry an N-linked (GlcNAc...) asparagine glycan. Residues 307-327 (LFLALAYLVTGAVTLLASFSM) traverse the membrane as a helical segment. Over 328–343 (MALHLKLKERKTFFLQ) the chain is Cytoplasmic.

This sequence belongs to the CDC50/LEM3 family.

It localises to the membrane. This is Cell cycle control protein 50C (TMEM30C) from Bos taurus (Bovine).